The primary structure comprises 324 residues: Olfactory receptor 7G2 (324 aa).

Residues 1–25 (MEARNQTAISKFLLLGLIEDPELQP) lie on the Extracellular side of the membrane. Residue Asn5 is glycosylated (N-linked (GlcNAc...) asparagine). The helical transmembrane segment at 26-46 (VLFSLFLSMYLVTILGNLLIL) threads the bilayer. Residues 47 to 54 (LAVISDSH) lie on the Cytoplasmic side of the membrane. The chain crosses the membrane as a helical span at residues 55–75 (LHTPMYFFLSNLSFLDICLST). Residues 76 to 99 (TTIPKMLVNIQAQNRSITYSGCLT) lie on the Extracellular side of the membrane. Asn89 carries N-linked (GlcNAc...) asparagine glycosylation. Cys97 and Cys189 form a disulfide bridge. The chain crosses the membrane as a helical span at residues 100-120 (QICFVLFFAGLENCLLAAMAY). Topologically, residues 121-139 (DRYVAICHPLRYTVIMNPR) are cytoplasmic. Residues 140–160 (LCGLLILLSLLTSVVNALLLS) traverse the membrane as a helical segment. Topologically, residues 161-197 (LMVLRLSFCTDLEIPLFFCELAQVIQLTCSDTLINNI) are extracellular. A helical transmembrane segment spans residues 198–217 (LIYFAACIFGGVPLSGIILS). The Cytoplasmic portion of the chain corresponds to 218 to 237 (YTQITSCVLRMPSASGKHKA). A helical transmembrane segment spans residues 238 to 258 (VSTCGSHLSIVLLFYGAGLGV). At 259–271 (YISSVVTDSPRKT) the chain is on the extracellular side. The helical transmembrane segment at 272 to 292 (AVASVMYSVFPQMVNPFIYSL) threads the bilayer. The Cytoplasmic segment spans residues 293–324 (RNKDMKGTLRKFIGRIPSLLWCAICFGFRFLE).

This sequence belongs to the G-protein coupled receptor 1 family.

Its subcellular location is the cell membrane. Functionally, odorant receptor. The sequence is that of Olfactory receptor 7G2 (OR7G2) from Homo sapiens (Human).